The following is a 984-amino-acid chain: MSRNDASQLDDGETTAESPPDDQANDAPEVGDPPGDPVDADSGVSRRTFLEGIGVASLLGIGTSAASDDSLFQMGGLKPVDDPIGNYPYRDWEDLYREKWDWDSVSRSTHSVNCTGSCSWNVYVKNGQVWREEQSGDYPRFDESLPDPNPRGCQKGACYTDYVNADQRIKHPLKRVGERGEGKWKRISWDEALTEIAEHVVDEVEAGRYDAISGFTPIPAMSPVSFASGSRLVNLLGGVSHSFYDWYSDLPPGQPITWGTQTDNAESADWYNADYIIAWGSNINVTRIPDAKYFLESGYNGTKRVGVFTDYSQTAIHTDEWLSPDSGTDTALALGMAQTIVDEGLYDEAHLKEQTDMPLLVRQDTGKFLRASDVPSVNTDADRPEWMLLMLDSNGRIREAPGSLGERDGQKDYSKSIELDFDPQLDGETTVQTQSGRVQVRTVWAELRDELANWDPEMVHEETTVGKETYQRIAREFAEADKAKIIQGKGVNDWYHNDLGNRALQLLVTLTGNLGEQGTGLDHYVGQEKIWTFHGWKTLSFPTGKVRGVPTTLWTYYHAGILDNTDPDTAAKIRESIDKGWMPVYPEERDNGSRPDPTTMFVWRGNYFNQAKGNVAVEEQLWPKLDLVVDINFRMDSTAMYSDIVLPTASHYEKHDLSMTDMHTYVHPFTPAVEPLGESKTDWQIFRELAQKIQEVATERGVEPISDRKFDREIDLQSVYDDYVRDWETGEEGALAEDRAACEYILEHSEESNPADSDEQITFADTVEQPQRLLEAGDHWTSDIEDGEAYAPWKDFVQDKNPWPTVTGRQQYYIDHDWFLELGEELPTHKEGPENTGGDYPMEYNTPHGRWAIHSTWRDSEKLLRLQRGEPLLYLHPEDAEERGIEDGDSVEVFNDLAEVELQAKIYPSSQRGTARMYFAWERFQFDSDSNFNSLVPMYMKPTQLVQYPEDSGEHLHFFPNYWGPTGVNSDVRVDVRKAGGGDE.

The interval 1 to 43 is disordered; that stretch reads MSRNDASQLDDGETTAESPPDDQANDAPEVGDPPGDPVDADSG. A compositionally biased stretch (acidic residues) spans 8–24; it reads QLDDGETTAESPPDDQA. Residues 103–167 enclose the 4Fe-4S Mo/W bis-MGD-type domain; it reads DSVSRSTHSV…CYTDYVNADQ (65 aa). [4Fe-4S] cluster is bound by residues H110, C114, C118, and C153. D249 is a binding site for Mo-bis(molybdopterin guanine dinucleotide).

This sequence belongs to the prokaryotic molybdopterin-containing oxidoreductase family. As to quaternary structure, probable multiprotein complex; a catalytic heterodimer of an alpha and beta chain is proposed to associate with additional subunits involved in membrane attachment and electron transfer. [4Fe-4S] cluster is required as a cofactor. Mo-bis(molybdopterin guanine dinucleotide) serves as cofactor. In terms of processing, exported by the Tat system.

It localises to the cell membrane. It carries out the reaction nitrate + a quinol = a quinone + nitrite + H2O. Inhibited by cyanide, azide and antimycin A. Enzyme stability is not dependent on salt concentration. The respiratory membrane-bound nitrate reductase enzyme complex plays a role in generation of metabolic energy by using nitrate as a terminal electron acceptor during anaerobic conditions. The alpha chain is the actual site of nitrate reduction. The protein is Respiratory nitrate reductase subunit alpha (narG) of Haloferax mediterranei (strain ATCC 33500 / DSM 1411 / JCM 8866 / NBRC 14739 / NCIMB 2177 / R-4) (Halobacterium mediterranei).